We begin with the raw amino-acid sequence, 352 residues long: WAT1-related protein At1g11450 (352 aa).

A run of 10 helical transmembrane segments spans residues W14 to V34, I46 to L66, F83 to Y103, T107 to L127, A139 to F159, W187 to F207, F219 to Y239, F253 to A273, V283 to I303, and L308 to W328. 2 consecutive EamA domains span residues M27–L157 and L192–E335.

The protein belongs to the drug/metabolite transporter (DMT) superfamily. Plant drug/metabolite exporter (P-DME) (TC 2.A.7.4) family.

The protein localises to the membrane. The protein is WAT1-related protein At1g11450 of Arabidopsis thaliana (Mouse-ear cress).